The chain runs to 159 residues: Ribosomal RNA large subunit methyltransferase H (159 aa).

Residues L76, G108, and 127-132 (FSKMTF) each bind S-adenosyl-L-methionine.

The protein belongs to the RNA methyltransferase RlmH family. As to quaternary structure, homodimer.

Its subcellular location is the cytoplasm. The catalysed reaction is pseudouridine(1915) in 23S rRNA + S-adenosyl-L-methionine = N(3)-methylpseudouridine(1915) in 23S rRNA + S-adenosyl-L-homocysteine + H(+). Its function is as follows. Specifically methylates the pseudouridine at position 1915 (m3Psi1915) in 23S rRNA. The polypeptide is Ribosomal RNA large subunit methyltransferase H (Clostridium botulinum (strain Okra / Type B1)).